We begin with the raw amino-acid sequence, 192 residues long: Ion-translocating oxidoreductase complex subunit B (192 aa).

The segment at 1-26 is hydrophobic; it reads MNAIWIAVAAVSLLGLAFGAILGYAS. One can recognise a 4Fe-4S domain in the interval 32 to 91; sequence EDDPVVEKIDEILPQSQCGQCGYPGCRPYAEAISCNGEKINRCAPGGEAVMLKIAELLNV. [4Fe-4S] cluster is bound by residues C49, C52, C57, C74, C117, C120, C123, C127, C147, C150, C153, and C157. 2 4Fe-4S ferredoxin-type domains span residues 108–137 and 138–167; these read MVAVIDENNCIGCTKCIQACPVDAIVGATR and VMHTVMSDLCTGCNLCVDPCPTHCISLQPV.

The protein belongs to the 4Fe4S bacterial-type ferredoxin family. RnfB subfamily. The complex is composed of six subunits: RsxA, RsxB, RsxC, RsxD, RsxE and RsxG. Requires [4Fe-4S] cluster as cofactor.

Its subcellular location is the cell inner membrane. Functionally, part of a membrane-bound complex that couples electron transfer with translocation of ions across the membrane. Required to maintain the reduced state of SoxR. The chain is Ion-translocating oxidoreductase complex subunit B from Shigella boydii serotype 4 (strain Sb227).